A 542-amino-acid chain; its full sequence is CTP synthase (542 aa).

The tract at residues Met-1–Val-265 is amidoligase domain. Position 13 (Ser-13) interacts with CTP. Ser-13 contacts UTP. Ser-14–Ile-19 contributes to the ATP binding site. L-glutamine is bound at residue Tyr-54. Asp-71 provides a ligand contact to ATP. Positions 71 and 140 each coordinate Mg(2+). Residues Asp-147 to Glu-149, Lys-186 to Gln-191, and Lys-222 contribute to the CTP site. Residues Lys-186–Gln-191 and Lys-222 each bind UTP. The Glutamine amidotransferase type-1 domain occupies Tyr-297 to Gly-532. Gly-352 is an L-glutamine binding site. The active-site Nucleophile; for glutamine hydrolysis is the Cys-379. L-glutamine contacts are provided by residues Tyr-380–Gln-383, Glu-403, and Arg-460. Active-site residues include His-505 and Glu-507.

Belongs to the CTP synthase family. In terms of assembly, homotetramer.

The catalysed reaction is UTP + L-glutamine + ATP + H2O = CTP + L-glutamate + ADP + phosphate + 2 H(+). The enzyme catalyses L-glutamine + H2O = L-glutamate + NH4(+). It catalyses the reaction UTP + NH4(+) + ATP = CTP + ADP + phosphate + 2 H(+). It functions in the pathway pyrimidine metabolism; CTP biosynthesis via de novo pathway; CTP from UDP: step 2/2. Its activity is regulated as follows. Allosterically activated by GTP, when glutamine is the substrate; GTP has no effect on the reaction when ammonia is the substrate. The allosteric effector GTP functions by stabilizing the protein conformation that binds the tetrahedral intermediate(s) formed during glutamine hydrolysis. Inhibited by the product CTP, via allosteric rather than competitive inhibition. Its function is as follows. Catalyzes the ATP-dependent amination of UTP to CTP with either L-glutamine or ammonia as the source of nitrogen. Regulates intracellular CTP levels through interactions with the four ribonucleotide triphosphates. In Caldivirga maquilingensis (strain ATCC 700844 / DSM 13496 / JCM 10307 / IC-167), this protein is CTP synthase.